The chain runs to 335 residues: tRNA-dihydrouridine(20/20a) synthase (335 aa).

FMN-binding positions include 20–22 (PML) and Q72. C102 (proton donor) is an active-site residue. Residues K141, H173, 213–215 (NGG), and 235–236 (GR) each bind FMN.

The protein belongs to the Dus family. DusA subfamily. The cofactor is FMN.

It catalyses the reaction 5,6-dihydrouridine(20) in tRNA + NADP(+) = uridine(20) in tRNA + NADPH + H(+). The catalysed reaction is 5,6-dihydrouridine(20) in tRNA + NAD(+) = uridine(20) in tRNA + NADH + H(+). The enzyme catalyses 5,6-dihydrouridine(20a) in tRNA + NADP(+) = uridine(20a) in tRNA + NADPH + H(+). It carries out the reaction 5,6-dihydrouridine(20a) in tRNA + NAD(+) = uridine(20a) in tRNA + NADH + H(+). Catalyzes the synthesis of 5,6-dihydrouridine (D), a modified base found in the D-loop of most tRNAs, via the reduction of the C5-C6 double bond in target uridines. Specifically modifies U20 and U20a in tRNAs. The polypeptide is tRNA-dihydrouridine(20/20a) synthase (Shewanella oneidensis (strain ATCC 700550 / JCM 31522 / CIP 106686 / LMG 19005 / NCIMB 14063 / MR-1)).